The sequence spans 1122 residues: Adhesin P1 (1122 aa).

An N-terminal signal peptide occupies residues 1 to 26; the sequence is MKKLIFKLSVGITPLALIGLGSFGLA. Disordered stretches follow at residues 182 to 208, 244 to 273, and 541 to 562; these read ATGDTSAEGSATPAGGGSSSSAAGGGA, DYNSDQNKIPKPKTLLDSSESSESINGGRT, and GALQNSGNPQPTSTPMPNSNGN. Gly residues predominate over residues 195–208; it reads AGGGSSSSAAGGGA. Residues 259–273 show a composition bias toward polar residues; it reads LDSSESSESINGGRT. Residues 1001–1021 form a helical membrane-spanning segment; that stretch reads AISIPIIIIALALALGLGIGI. The tract at residues 1066-1122 is disordered; that stretch reads KTPQMLQANKKDGASSPSKPSAPAAKKPAGPTKPSAPGAKPTAPAKPKAPAPTKKIE. The segment covering 1079 to 1122 has biased composition (low complexity); sequence ASSPSKPSAPAAKKPAGPTKPSAPGAKPTAPAKPKAPAPTKKIE.

It belongs to the adhesin P1 family.

The protein resides in the cell membrane. Could be involved in cytadherence. The protein is Adhesin P1 (gapA) of Mycoplasmoides gallisepticum (strain R(low / passage 15 / clone 2)) (Mycoplasma gallisepticum).